A 186-amino-acid polypeptide reads, in one-letter code: Probable GTP-binding protein EngB (186 aa).

The EngB-type G domain occupies 18–186 (SKKEVCLIGR…LMLKIIDVIS (169 aa)). GTP contacts are provided by residues 26–33 (GRSNVGKS), 52–56 (GRTVT), 69–72 (DLPG), 135–138 (NKID), and 166–168 (ISA). Residues Ser33 and Thr54 each contribute to the Mg(2+) site.

It belongs to the TRAFAC class TrmE-Era-EngA-EngB-Septin-like GTPase superfamily. EngB GTPase family. Mg(2+) is required as a cofactor.

Necessary for normal cell division and for the maintenance of normal septation. This Mycoplasmoides gallisepticum (strain R(low / passage 15 / clone 2)) (Mycoplasma gallisepticum) protein is Probable GTP-binding protein EngB.